Consider the following 388-residue polypeptide: Deoxyguanosinetriphosphate triphosphohydrolase-like protein (388 aa).

The interval 24 to 44 (HSAQTRGRVHAEPPSTSRTEF) is disordered. Positions 78–209 (RLTHSLEVAQ…ANLADEVAYN (132 aa)) constitute an HD domain.

The protein belongs to the dGTPase family. Type 2 subfamily.

The chain is Deoxyguanosinetriphosphate triphosphohydrolase-like protein from Ralstonia pickettii (strain 12J).